A 246-amino-acid chain; its full sequence is Uridylate kinase (246 aa).

10–13 contributes to the ATP binding site; sequence KLSG. G52 serves as a coordination point for UMP. ATP-binding residues include G53 and R57. Residues D72 and 133–140 contribute to the UMP site; that span reads TGNPFFTT. 3 residues coordinate ATP: T160, Y166, and D169.

Belongs to the UMP kinase family. As to quaternary structure, homohexamer.

The protein resides in the cytoplasm. It catalyses the reaction UMP + ATP = UDP + ADP. Its pathway is pyrimidine metabolism; CTP biosynthesis via de novo pathway; UDP from UMP (UMPK route): step 1/1. With respect to regulation, inhibited by UTP. Its function is as follows. Catalyzes the reversible phosphorylation of UMP to UDP. This chain is Uridylate kinase, found in Halorhodospira halophila (strain DSM 244 / SL1) (Ectothiorhodospira halophila (strain DSM 244 / SL1)).